Reading from the N-terminus, the 592-residue chain is Probable translation initiation factor IF-2 (592 aa).

The 222-residue stretch at 5 to 226 (IRSPFVVVMG…AGVSQRFIPR (222 aa)) folds into the tr-type G domain. Residues 14–21 (GHVDVGKT) are G1. 14–21 (GHVDVGKT) contributes to the GTP binding site. Residues 39 to 43 (MITQH) are G2. The G3 stretch occupies residues 80–83 (DTPG). Residues 80 to 84 (DTPGH) and 134 to 137 (NKLD) contribute to the GTP site. A G4 region spans residues 134 to 137 (NKLD). Residues 202-204 (SAV) are G5.

Belongs to the TRAFAC class translation factor GTPase superfamily. Classic translation factor GTPase family. IF-2 subfamily.

In terms of biological role, function in general translation initiation by promoting the binding of the formylmethionine-tRNA to ribosomes. Seems to function along with eIF-2. In Pyrobaculum calidifontis (strain DSM 21063 / JCM 11548 / VA1), this protein is Probable translation initiation factor IF-2.